Reading from the N-terminus, the 148-residue chain is Urease accessory protein UreE (148 aa).

It belongs to the UreE family.

It is found in the cytoplasm. In terms of biological role, involved in urease metallocenter assembly. Binds nickel. Probably functions as a nickel donor during metallocenter assembly. The sequence is that of Urease accessory protein UreE from Lysinibacillus sphaericus (strain C3-41).